Consider the following 53-residue polypeptide: Conotoxin Cal9.2f (53 aa).

Positions 1–6 are excised as a propeptide; that stretch reads KKGVTL. 3 cysteine pairs are disulfide-bonded: Cys-15-Cys-32, Cys-20-Cys-42, and Cys-22-Cys-47.

As to expression, expressed by the venom duct.

It localises to the secreted. In terms of biological role, probable neurotoxin with unknown target. Possibly targets ion channels. This Californiconus californicus (California cone) protein is Conotoxin Cal9.2f.